The primary structure comprises 282 residues: Pantothenate synthetase (282 aa).

30-37 contacts ATP; the sequence is MGGLHQGH. The active-site Proton donor is the His-37. Position 61 (Gln-61) interacts with (R)-pantoate. Gln-61 is a binding site for beta-alanine. 146 to 149 contributes to the ATP binding site; that stretch reads GQKD. Residue Gln-152 coordinates (R)-pantoate. ATP contacts are provided by residues Ile-175 and 183–186; that span reads MSTR.

This sequence belongs to the pantothenate synthetase family. In terms of assembly, homodimer.

The protein localises to the cytoplasm. The catalysed reaction is (R)-pantoate + beta-alanine + ATP = (R)-pantothenate + AMP + diphosphate + H(+). The protein operates within cofactor biosynthesis; (R)-pantothenate biosynthesis; (R)-pantothenate from (R)-pantoate and beta-alanine: step 1/1. Its function is as follows. Catalyzes the condensation of pantoate with beta-alanine in an ATP-dependent reaction via a pantoyl-adenylate intermediate. The sequence is that of Pantothenate synthetase from Vesicomyosocius okutanii subsp. Calyptogena okutanii (strain HA).